Reading from the N-terminus, the 121-residue chain is NLIQFGNMISAMTGKSSLAYASYGCYCGWGGKGQPKDDTDRCCFVHDCCYGKADKCSPKMILYSYKFHNGNIVCGDKNACKKKVCECDRVAAICFAASKHSYNKNLWRYPSSKCTGTAEKC.

7 disulfide bridges follow: Cys-25–Cys-114, Cys-27–Cys-43, Cys-42–Cys-94, Cys-48–Cys-121, Cys-49–Cys-87, Cys-56–Cys-80, and Cys-74–Cys-85. Tyr-26, Gly-28, and Gly-30 together coordinate Ca(2+). His-46 is an active-site residue. Asp-47 is a Ca(2+) binding site. The active site involves Asp-88.

This sequence belongs to the phospholipase A2 family. Group II subfamily. D49 sub-subfamily. As to quaternary structure, monomer. Requires Ca(2+) as cofactor. Expressed by the venom gland.

It localises to the secreted. It carries out the reaction a 1,2-diacyl-sn-glycero-3-phosphocholine + H2O = a 1-acyl-sn-glycero-3-phosphocholine + a fatty acid + H(+). Functionally, snake venom phospholipase A2 (PLA2) that shows anticoagulant activity and presynaptic neurotoxicity. Acts as an anticoagulant toxin by inhibiting prothrombinase complex formation. Shows about 50% of the prothrombinase complex inhibition compared to CM-IV of N.nigricollis venom. Acts as a neurotoxin by inhibiting neuromuscular transmission by blocking acetylcholine release from the nerve termini. PLA2 catalyzes the calcium-dependent hydrolysis of the 2-acyl groups in 3-sn-phosphoglycerides. The protein is Basic phospholipase A2 caudoxin of Bitis caudalis (Horned adder).